Consider the following 283-residue polypeptide: Polyprenyl-phosphate transporter (283 aa).

9 helical membrane passes run 27 to 47, 51 to 71, 85 to 105, 112 to 132, 148 to 168, 169 to 189, 197 to 217, 230 to 250, and 255 to 275; these read GTIALLLGIYNQFIASISGIF, FWPSFTFLIPIIIGMLLAMGS, IPTMFFFGGLIIGIVPYLLKI, FTTKHYMMVIAGIAILIVITL, TSLIIKYFIAGMCASSAMLLP, GISGSFMLLVFGVYGTVMLAI, FAGLPILLAVGFGVLAGFIIS, LMTFALIIGFVVGSLFAVFPG, and IVMWFVSLVVFIIGFIVSLTL.

It belongs to the PopT family.

The protein resides in the cell membrane. With respect to regulation, active in alkaline conditions. Functionally, flippase that catalyzes the transport of undecaprenyl phosphate (UndP) across the cytoplasmic membrane, from the external side to the cytoplasmic side. Is involved in UndP recycling during peptidoglycan synthesis. Necessary for peptidoglycan maintenance. The protein is Polyprenyl-phosphate transporter of Staphylococcus aureus (strain NCTC 8325 / PS 47).